The primary structure comprises 187 residues: Choriogonadotropin subunit beta variant 1 (187 aa).

Positions 1-50 are cleaved as a signal peptide; sequence MSTFPVLAEDIPLRERHVKGRVDPHFRAPKMEMFQRLLLLLLLSMGGTWA. Cystine bridges form between Cys-59–Cys-107, Cys-73–Cys-122, Cys-76–Cys-160, Cys-84–Cys-138, Cys-88–Cys-140, and Cys-143–Cys-150. Residues Asn-63 and Asn-80 are each glycosylated (N-linked (GlcNAc...) asparagine). The disordered stretch occupies residues 161-187; the sequence is DDPRFQDSSSSKAPPPSLPSPSRLPGP. The segment covering 173 to 187 has biased composition (pro residues); that stretch reads APPPSLPSPSRLPGP.

The protein belongs to the glycoprotein hormones subunit beta family. Expressed in placenta, testis and pituitary.

It is found in the secreted. The polypeptide is Choriogonadotropin subunit beta variant 1 (CGB1) (Homo sapiens (Human)).